The following is a 68-amino-acid chain: Small integral membrane protein 45 (68 aa).

Residues 7–27 (WFVPVYLVISVLILVGFGACI) form a helical membrane-spanning segment.

In terms of tissue distribution, highly expressed in brain.

The protein localises to the nucleus. It is found in the cytoplasm. It localises to the membrane. Plays a role in the regulation of neuron maturation. The sequence is that of Small integral membrane protein 45 from Homo sapiens (Human).